We begin with the raw amino-acid sequence, 166 residues long: Dihydrofolate reductase (166 aa).

The region spanning 6–164 (KISLIVAMDK…YDYYFHIYER (159 aa)) is the DHFR domain. 10 to 12 (IVA) serves as a coordination point for substrate. NADP(+) contacts are provided by residues 11–12 (VA) and 19–24 (IGKDND). Position 32 (Asp-32) interacts with substrate. Residue 48 to 51 (GRKN) coordinates NADP(+). Arg-62 is a binding site for substrate. NADP(+) is bound by residues 67-70 (LTRD) and 100-105 (FGGEQI). A substrate-binding site is contributed by Thr-119.

Belongs to the dihydrofolate reductase family.

It carries out the reaction (6S)-5,6,7,8-tetrahydrofolate + NADP(+) = 7,8-dihydrofolate + NADPH + H(+). It participates in cofactor biosynthesis; tetrahydrofolate biosynthesis; 5,6,7,8-tetrahydrofolate from 7,8-dihydrofolate: step 1/1. Its function is as follows. Key enzyme in folate metabolism. Catalyzes an essential reaction for de novo glycine and purine synthesis, and for DNA precursor synthesis. The polypeptide is Dihydrofolate reductase (dfrD) (Staphylococcus haemolyticus).